The following is a 344-amino-acid chain: MNRIFPEQLNHHLAQGLARVYLLQGQDPLLLSETEDTICQVANLQGFDEKNTIQVDSQTDWAQLIESCQSIGLFFSKQILSLNLPENFTALLQKNLQELISVLHKDVLLILQVAKLAKGIEKQTWFITLNQYEPNTILINCQTPTVENLPRWVKNRTKAMGLDADNEAIQQLCYSYENNLLALKQALQLLDLLYPDHKLNYNRVISVVEQSSIFTPFQWIDALLVGKANRAKRILKGLQAEDVQPVILLRTLQRELFTLLELTKPQQRIVTTEKLPIQQIKTEFDRLKIWQNRRPLFLSAIQRLTYQTLYEIIQELANIERLAKQEFSDEVWIKLADLSVKICL.

The protein belongs to the DNA polymerase HolA subunit family. As to quaternary structure, DNA polymerase III contains a core (composed of alpha, epsilon and theta chains) that associates with a tau subunit. This core dimerizes to form the POLIII' complex. PolIII' associates with the gamma complex (composed of gamma, delta, delta', psi and chi chains) and with the beta chain to form the complete DNA polymerase III complex.

The catalysed reaction is DNA(n) + a 2'-deoxyribonucleoside 5'-triphosphate = DNA(n+1) + diphosphate. DNA polymerase III is a complex, multichain enzyme responsible for most of the replicative synthesis in bacteria. This DNA polymerase also exhibits 3' to 5' exonuclease activity. The delta subunit seems to interact with the gamma subunit to transfer the beta subunit on the DNA. This Haemophilus influenzae (strain ATCC 51907 / DSM 11121 / KW20 / Rd) protein is DNA polymerase III subunit delta (holA).